An 873-amino-acid polypeptide reads, in one-letter code: Alanine--tRNA ligase (873 aa).

H559, H563, C661, and H665 together coordinate Zn(2+).

Belongs to the class-II aminoacyl-tRNA synthetase family. Homotetramer. Zn(2+) serves as cofactor.

It localises to the cytoplasm. It catalyses the reaction tRNA(Ala) + L-alanine + ATP = L-alanyl-tRNA(Ala) + AMP + diphosphate. Functionally, catalyzes the attachment of alanine to tRNA(Ala) in a two-step reaction: alanine is first activated by ATP to form Ala-AMP and then transferred to the acceptor end of tRNA(Ala). Also edits incorrectly charged Ser-tRNA(Ala) and Gly-tRNA(Ala) via its editing domain. In Wigglesworthia glossinidia brevipalpis, this protein is Alanine--tRNA ligase.